The primary structure comprises 289 residues: MALTEAWLIEKANRKLNAGGMYKITSDKTRNVIKKMAKEGIYLCVAQGYRSTAEQNALYAQGRTKPGAIVTNAKGGQSNHNYGVAVDLCLYTNDGKDVIWESTTSRWKKVVAAMKAEGFKWGGDWKSFKDYPHFELCDAVSGEKIPAATQNTNTNSNRYEGKVIDSAPLLPKMDFKSSPFRMYKVGTEFLVYDHNQYWYKTYIDDKLYYMYKSFCDVVAKKDAKGRIKVRIKSAKDLRIPVWNNIKLNSGKIKWYAPNVKLAWYNYRRGYLELWYPNDGWYYTAEYFLK.

This sequence belongs to the peptidase M15C family.

It localises to the secreted. In terms of biological role, cell wall lytic enzyme. Hydrolyzes the link between L-alanine and D-glutamate residues in certain bacterial cell-wall glycopeptides. This Listeria monocytogenes (Bacteriophage A500) protein is L-alanyl-D-glutamate peptidase (ply).